A 165-amino-acid chain; its full sequence is uncharacterized protein (165 aa).

The 86-residue stretch at 76-161 folds into the RCK C-terminal domain; the sequence is LEQVESALDD…LKRLIREKLT (86 aa).

This is an uncharacterized protein from Bacillus subtilis (strain 168).